We begin with the raw amino-acid sequence, 1023 residues long: Sodium/potassium-transporting ATPase subunit alpha-1 (1023 aa).

A propeptide spanning residues 1–5 (MAFKV) is cleaved from the precursor. A compositionally biased stretch (basic and acidic residues) spans 1–11 (MAFKVGRDKYE). Residues 1-38 (MAFKVGRDKYEPAAVSEQGDKKGKKGKKDRDMDELKKE) are disordered. Residues 6–87 (GRDKYEPAAV…NALTPPPTTP (82 aa)) are Cytoplasmic-facing. Lysine 9 bears the N6-acetyllysine mark. Phosphotyrosine is present on tyrosine 10. A Phosphoserine; by PKC modification is found at serine 16. Lysine 21 carries the post-translational modification N6-acetyllysine. The span at 28–38 (KDRDMDELKKE) shows a compositional bias: basic and acidic residues. A phosphoserine mark is found at serine 40 and serine 47. Positions 82–84 (PPP) are phosphoinositide-3 kinase binding. Residues 88 to 108 (EWIKFCRQLFGGFSMLLWIGA) traverse the membrane as a helical segment. Residues 109 to 131 (ILCFLAYSIQAATEEEPQNDNLY) lie on the Extracellular side of the membrane. Residues 132–152 (LGVVLSAVVIITGCFSYYQEA) form a helical membrane-spanning segment. The Cytoplasmic portion of the chain corresponds to 153-288 (KSSKIMESFK…GGQTPIAAEI (136 aa)). The segment at 216–235 (SSLTGESEPQTRSPDFTNEN) is disordered. Serine 228 carries the phosphoserine modification. The residue at position 260 (tyrosine 260) is a Phosphotyrosine. Residues 289-308 (EHFIHIITGVAVFLGVSFFI) traverse the membrane as a helical segment. Topologically, residues 309 to 320 (LSLILEYTWLEA) are extracellular. Residues 321 to 338 (VIFLIGIIVANVPEGLLA) form a helical membrane-spanning segment. Residues 339-772 (TVTVCLTLTA…EEGRLIFDNL (434 aa)) lie on the Cytoplasmic side of the membrane. Aspartate 376 (4-aspartylphosphate intermediate) is an active-site residue. 2 positions are modified to phosphoserine: serine 452 and serine 484. Lysine 487 is a binding site for ATP. Phosphotyrosine is present on tyrosine 542. A mediates interaction with SCN7A region spans residues 596–717 (RAAVPDAVGK…QGAIVAVTGD (122 aa)). Lysine 661 carries the post-translational modification N6-succinyllysine. Residues serine 668 and serine 675 each carry the phosphoserine modification. The Mg(2+) site is built by aspartate 717 and aspartate 721. A helical membrane pass occupies residues 773 to 792 (KKSIAYTLTSNIPEITPFLI). The Extracellular segment spans residues 793 to 802 (FIIANIPLPL). A helical membrane pass occupies residues 803–823 (GTVTILCIDLGTDMVPAISLA). Residues 824–843 (YEQAESDIMKRQPRNPKTDK) are Cytoplasmic-facing. A helical membrane pass occupies residues 844-866 (LVNERLISTAYGQIGMIQALGGF). Residues 867–918 (FTYFVILAENGFLPLHLLGLRVDWDDRWINDVEDSYGQQWTYEQRKIVEFTC) are Extracellular-facing. A helical membrane pass occupies residues 919 to 938 (HTAFFVSIVVVQWADLVICK). Topologically, residues 939 to 951 (TRRNSVFQQGMKN) are cytoplasmic. Phosphoserine; by PKA is present on serine 943. The helical transmembrane segment at 952–970 (KILIFGLFEETALAAFLSY) threads the bilayer. The Extracellular segment spans residues 971–985 (CPGMGVALRMYPLKP). A helical transmembrane segment spans residues 986 to 1006 (TWWFCAFPYSLLIFVYDEVRK). The Cytoplasmic portion of the chain corresponds to 1007–1023 (LIIRRRPGGWVEKETYY).

It belongs to the cation transport ATPase (P-type) (TC 3.A.3) family. Type IIC subfamily. In terms of assembly, the sodium/potassium-transporting ATPase is composed of a catalytic alpha subunit, an auxiliary non-catalytic beta subunit and an additional regulatory subunit. Interacts with regulatory subunit FXYD1. Interacts with regulatory subunit FXYD3. Interacts with SIK1. Interacts with SLC35G1 and STIM1. Interacts with CLN3; this interaction regulates the sodium/potassium-transporting ATPase complex localization at the plasma membrane. Interacts with SCN7A; activates ATP1A1 P-type sodium:potassium-exchanging transporter activity which indirectly signals to nearby neurons to regulate sodium homeostasis. Post-translationally, phosphorylation on Tyr-10 modulates pumping activity. Phosphorylation of Ser-943 by PKA modulates the response of ATP1A1 to PKC. Dephosphorylation by protein phosphatase 2A (PP2A) following increases in intracellular sodium, leading to increase catalytic activity.

The protein resides in the cell membrane. Its subcellular location is the basolateral cell membrane. It localises to the sarcolemma. The protein localises to the cell projection. It is found in the axon. The protein resides in the melanosome. It catalyses the reaction K(+)(out) + Na(+)(in) + ATP + H2O = K(+)(in) + Na(+)(out) + ADP + phosphate + H(+). This is the catalytic component of the active enzyme, which catalyzes the hydrolysis of ATP coupled with the exchange of sodium and potassium ions across the plasma membrane. This action creates the electrochemical gradient of sodium and potassium ions, providing the energy for active transport of various nutrients. Could also be part of an osmosensory signaling pathway that senses body-fluid sodium levels and controls salt intake behavior as well as voluntary water intake to regulate sodium homeostasis. In Pongo abelii (Sumatran orangutan), this protein is Sodium/potassium-transporting ATPase subunit alpha-1 (ATP1A1).